A 304-amino-acid polypeptide reads, in one-letter code: tRNA-uridine aminocarboxypropyltransferase 1 (304 aa).

Serine 2 carries the N-acetylserine modification. Positions aspartate 206–tryptophan 209 match the DXTW motif.

This sequence belongs to the TDD superfamily. DTWD1 family.

It localises to the nucleus. It carries out the reaction a uridine in tRNA + S-adenosyl-L-methionine = a 3-[(3S)-3-amino-3-carboxypropyl]uridine in tRNA + S-methyl-5'-thioadenosine + H(+). Functionally, catalyzes the formation of 3-(3-amino-3-carboxypropyl)uridine (acp3U) at position 20 in the D-loop of several cytoplasmic tRNAs (acp3U(20)). This Pongo abelii (Sumatran orangutan) protein is tRNA-uridine aminocarboxypropyltransferase 1.